Consider the following 355-residue polypeptide: UDP-N-acetylglucosamine--N-acetylmuramyl-(pentapeptide) pyrophosphoryl-undecaprenol N-acetylglucosamine transferase (355 aa).

Residues 14 to 16 (SGG), Asn-126, Arg-162, Ser-190, Ile-243, 262 to 267 (ALTVSE), and Gln-288 contribute to the UDP-N-acetyl-alpha-D-glucosamine site.

The protein belongs to the glycosyltransferase 28 family. MurG subfamily.

Its subcellular location is the cell inner membrane. It catalyses the reaction di-trans,octa-cis-undecaprenyl diphospho-N-acetyl-alpha-D-muramoyl-L-alanyl-D-glutamyl-meso-2,6-diaminopimeloyl-D-alanyl-D-alanine + UDP-N-acetyl-alpha-D-glucosamine = di-trans,octa-cis-undecaprenyl diphospho-[N-acetyl-alpha-D-glucosaminyl-(1-&gt;4)]-N-acetyl-alpha-D-muramoyl-L-alanyl-D-glutamyl-meso-2,6-diaminopimeloyl-D-alanyl-D-alanine + UDP + H(+). Its pathway is cell wall biogenesis; peptidoglycan biosynthesis. Cell wall formation. Catalyzes the transfer of a GlcNAc subunit on undecaprenyl-pyrophosphoryl-MurNAc-pentapeptide (lipid intermediate I) to form undecaprenyl-pyrophosphoryl-MurNAc-(pentapeptide)GlcNAc (lipid intermediate II). In Blochmanniella pennsylvanica (strain BPEN), this protein is UDP-N-acetylglucosamine--N-acetylmuramyl-(pentapeptide) pyrophosphoryl-undecaprenol N-acetylglucosamine transferase.